A 173-amino-acid chain; its full sequence is Large ribosomal subunit protein uL10 (173 aa).

The protein belongs to the universal ribosomal protein uL10 family. As to quaternary structure, part of the ribosomal stalk of the 50S ribosomal subunit. The N-terminus interacts with L11 and the large rRNA to form the base of the stalk. The C-terminus forms an elongated spine to which L12 dimers bind in a sequential fashion forming a multimeric L10(L12)X complex.

Functionally, forms part of the ribosomal stalk, playing a central role in the interaction of the ribosome with GTP-bound translation factors. The polypeptide is Large ribosomal subunit protein uL10 (Thermus thermophilus (strain ATCC BAA-163 / DSM 7039 / HB27)).